Reading from the N-terminus, the 175-residue chain is Thioredoxin M-type, chloroplastic (175 aa).

Residues 1–62 (MALETCLRGW…ARRPSRFVCK (62 aa)) constitute a chloroplast transit peptide. A Thioredoxin domain is found at 63 to 174 (CKNVVDEVIV…LCTIIDKYIG (112 aa)). The cysteines at positions 98 and 101 are disulfide-linked.

Belongs to the thioredoxin family. Plant M-type subfamily. As to quaternary structure, forms a complex with heterodimeric ferredoxin-thioredoxin reductase (FTR) and ferredoxin.

It is found in the plastid. The protein localises to the chloroplast. Its function is as follows. Participates in various redox reactions through the reversible oxidation of the active center dithiol to a disulfide. The M form is known to activate NADP-malate dehydrogenase. This chain is Thioredoxin M-type, chloroplastic, found in Triticum aestivum (Wheat).